Reading from the N-terminus, the 384-residue chain is Class V chitinase CHIT5a (384 aa).

A signal peptide spans 1–27 (MAVQKIIITPILVFLVTIFFNVSSSSS). N29, N114, and N133 each carry an N-linked (GlcNAc...) asparagine glycan. The region spanning 39–384 (GVRSAYWPAG…SKQASNAWGH (346 aa)) is the GH18 domain. The Proton donor role is filled by E152. N195 and N234 each carry an N-linked (GlcNAc...) asparagine glycan.

Belongs to the glycosyl hydrolase 18 family. Chitinase class V subfamily.

It catalyses the reaction Random endo-hydrolysis of N-acetyl-beta-D-glucosaminide (1-&gt;4)-beta-linkages in chitin and chitodextrins.. It functions in the pathway glycan degradation; chitin degradation. Possesses chitinase activity in vitro toward glycol chitin, carboxymethyl-chitin, colloidal chitin, and the chitin oligosaccharides (N-acetylglucosamine) (GlcNAc)6 and (GlcNAc)5. Hydrolyzes (GlcNAc)6 into (GlcNAc)4 and (GlcNAc)2, or two (GlcNAc)3 molecules. Has the capacity to inhibit hyphal growth of the fungus Trichoderma viride in an agar-plate bioassay. In Medicago truncatula (Barrel medic), this protein is Class V chitinase CHIT5a.